The primary structure comprises 750 residues: Photosystem I P700 chlorophyll a apoprotein A1 (750 aa).

A run of 8 helical transmembrane segments spans residues 70–93 (VFSA…FHGA), 156–179 (LYCT…FHYH), 195–219 (LNHH…HVSL), 291–309 (IAHH…GHMY), 346–369 (WHAQ…HHMY), 385–411 (LSLF…IFMV), 433–455 (AIIS…LYIH), and 531–549 (FLVH…LILL). [4Fe-4S] cluster-binding residues include C573 and C582. Transmembrane regions (helical) follow at residues 589–610 (HVFL…HFSW) and 664–686 (LSAY…MFLF). H675 contributes to the chlorophyll a' binding site. Chlorophyll a-binding residues include M683 and Y691. W692 lines the phylloquinone pocket. Residues 724-744 (AVGVTHYLLGGIATTWAFFLA) form a helical membrane-spanning segment.

It belongs to the PsaA/PsaB family. The PsaA/B heterodimer binds the P700 chlorophyll special pair and subsequent electron acceptors. PSI consists of a core antenna complex that captures photons, and an electron transfer chain that converts photonic excitation into a charge separation. The eukaryotic PSI reaction center is composed of at least 11 subunits. It depends on P700 is a chlorophyll a/chlorophyll a' dimer, A0 is one or more chlorophyll a, A1 is one or both phylloquinones and FX is a shared 4Fe-4S iron-sulfur center. as a cofactor.

The protein localises to the plastid. Its subcellular location is the chloroplast thylakoid membrane. It carries out the reaction reduced [plastocyanin] + hnu + oxidized [2Fe-2S]-[ferredoxin] = oxidized [plastocyanin] + reduced [2Fe-2S]-[ferredoxin]. Functionally, psaA and PsaB bind P700, the primary electron donor of photosystem I (PSI), as well as the electron acceptors A0, A1 and FX. PSI is a plastocyanin-ferredoxin oxidoreductase, converting photonic excitation into a charge separation, which transfers an electron from the donor P700 chlorophyll pair to the spectroscopically characterized acceptors A0, A1, FX, FA and FB in turn. Oxidized P700 is reduced on the lumenal side of the thylakoid membrane by plastocyanin. The polypeptide is Photosystem I P700 chlorophyll a apoprotein A1 (Aethionema cordifolium (Lebanon stonecress)).